Consider the following 184-residue polypeptide: Cytosolic Prostaglandin E synthase (184 aa).

The CS domain occupies 7 to 96 (LIPPPVSWAQ…AAGPYWSSLT (90 aa)). Residues 115–184 (ESDDEEGDQK…EGDKEKKPAA (70 aa)) are disordered. Phosphoserine is present on residues serine 116, serine 127, serine 135, serine 156, and serine 162. Residues 147–158 (FNVDDEEEDSDD) are compositionally biased toward acidic residues. Positions 175 to 184 (EGDKEKKPAA) are enriched in basic and acidic residues.

This sequence belongs to the p23/wos2 family.

The protein resides in the cytoplasm. It carries out the reaction prostaglandin H2 = prostaglandin E2. Cytosolic prostaglandin synthase that catalyzes the oxidoreduction of prostaglandin endoperoxide H2 (PGH2) to prostaglandin E2 (PGE2). Through production of PGE2 may regulate the activity of non-muscle myosin II in an autocrine or paracrine fashion; this may influence border cell and nurse cell stiffness to facilitate border cell migration during oogenesis. The chain is Cytosolic Prostaglandin E synthase from Drosophila melanogaster (Fruit fly).